Reading from the N-terminus, the 555-residue chain is Oxygen-dependent choline dehydrogenase (555 aa).

4–33 (DYIIIGAGSAGNVLATRLTEDPDVTVLLLE) is a binding site for FAD. His-473 functions as the Proton acceptor in the catalytic mechanism.

The protein belongs to the GMC oxidoreductase family. The cofactor is FAD.

It carries out the reaction choline + A = betaine aldehyde + AH2. It catalyses the reaction betaine aldehyde + NAD(+) + H2O = glycine betaine + NADH + 2 H(+). The protein operates within amine and polyamine biosynthesis; betaine biosynthesis via choline pathway; betaine aldehyde from choline (cytochrome c reductase route): step 1/1. Its function is as follows. Involved in the biosynthesis of the osmoprotectant glycine betaine. Catalyzes the oxidation of choline to betaine aldehyde and betaine aldehyde to glycine betaine at the same rate. The polypeptide is Oxygen-dependent choline dehydrogenase (Proteus mirabilis (strain HI4320)).